A 58-amino-acid polypeptide reads, in one-letter code: Small ribosomal subunit protein bS21 (58 aa).

The disordered stretch occupies residues 36-58 (EHYEKPSVKRKKKSEAARKRKFK). The segment covering 43–58 (VKRKKKSEAARKRKFK) has biased composition (basic residues).

This sequence belongs to the bacterial ribosomal protein bS21 family.

In Clostridium kluyveri (strain NBRC 12016), this protein is Small ribosomal subunit protein bS21.